We begin with the raw amino-acid sequence, 166 residues long: NADPH-dependent 7-cyano-7-deazaguanine reductase (166 aa).

The active-site Thioimide intermediate is the Cys57. Residue Asp64 is the Proton donor of the active site. Substrate is bound by residues 79–81 (VES) and 98–99 (HE).

It belongs to the GTP cyclohydrolase I family. QueF type 1 subfamily.

The protein resides in the cytoplasm. The catalysed reaction is 7-aminomethyl-7-carbaguanine + 2 NADP(+) = 7-cyano-7-deazaguanine + 2 NADPH + 3 H(+). The protein operates within tRNA modification; tRNA-queuosine biosynthesis. Functionally, catalyzes the NADPH-dependent reduction of 7-cyano-7-deazaguanine (preQ0) to 7-aminomethyl-7-deazaguanine (preQ1). The polypeptide is NADPH-dependent 7-cyano-7-deazaguanine reductase (Staphylococcus saprophyticus subsp. saprophyticus (strain ATCC 15305 / DSM 20229 / NCIMB 8711 / NCTC 7292 / S-41)).